Reading from the N-terminus, the 371-residue chain is Glycosyltransferase 8 domain-containing protein 1 (371 aa).

Residues 1 to 7 (MSFRKVN) lie on the Cytoplasmic side of the membrane. A helical; Signal-anchor for type II membrane protein transmembrane segment spans residues 8–28 (IVILVLAVALFLLVLHHNFLG). The Lumenal portion of the chain corresponds to 29–371 (LSSLLRNEVS…RRHVEISNTK (343 aa)). N-linked (GlcNAc...) asparagine glycosylation is found at asparagine 103 and asparagine 257.

It belongs to the glycosyltransferase 8 family.

It is found in the membrane. This is Glycosyltransferase 8 domain-containing protein 1 (GLT8D1) from Bos taurus (Bovine).